Consider the following 176-residue polypeptide: NAD(P)H-quinone oxidoreductase subunit 6, chloroplastic (176 aa).

A run of 5 helical transmembrane segments spans residues 10–30 (FLLVFLGSGLILGGLGVVLLP), 32–52 (PIYSAFSLGLVLVCTSLFYIL), 61–81 (AQLLIYVGAINVLIIFAVMFM), 92–112 (LWTVGDGVTSMVCTSIFVSLI), and 152–172 (FFLPFELISIILLVSLIGAIT).

It belongs to the complex I subunit 6 family. In terms of assembly, NDH is composed of at least 16 different subunits, 5 of which are encoded in the nucleus.

The protein resides in the plastid. Its subcellular location is the chloroplast thylakoid membrane. The catalysed reaction is a plastoquinone + NADH + (n+1) H(+)(in) = a plastoquinol + NAD(+) + n H(+)(out). It carries out the reaction a plastoquinone + NADPH + (n+1) H(+)(in) = a plastoquinol + NADP(+) + n H(+)(out). NDH shuttles electrons from NAD(P)H:plastoquinone, via FMN and iron-sulfur (Fe-S) centers, to quinones in the photosynthetic chain and possibly in a chloroplast respiratory chain. The immediate electron acceptor for the enzyme in this species is believed to be plastoquinone. Couples the redox reaction to proton translocation, and thus conserves the redox energy in a proton gradient. This is NAD(P)H-quinone oxidoreductase subunit 6, chloroplastic (ndhG) from Daucus carota (Wild carrot).